Reading from the N-terminus, the 644-residue chain is Exoribonuclease 2 (644 aa).

An RNB domain is found at 189–516 (RQDLTALNFV…NHRLLKAVIK (328 aa)). Residues 561–643 (DTRFAAEIID…DTRSIIARPA (83 aa)) enclose the S1 motif domain.

It belongs to the RNR ribonuclease family. RNase II subfamily.

It is found in the cytoplasm. The enzyme catalyses Exonucleolytic cleavage in the 3'- to 5'-direction to yield nucleoside 5'-phosphates.. Its function is as follows. Involved in mRNA degradation. Hydrolyzes single-stranded polyribonucleotides processively in the 3' to 5' direction. This chain is Exoribonuclease 2, found in Salmonella arizonae (strain ATCC BAA-731 / CDC346-86 / RSK2980).